The following is a 753-amino-acid chain: A-kinase anchor protein 200 (753 aa).

Disordered regions lie at residues 1–345 (MGKA…QIEA), 462–482 (VETRSSSPPPPLPKSPPPSRV), 531–604 (TEQE…IDPA), 620–641 (VEKETGSISSNVAESSSVSDEQ), and 658–684 (VEETTEQETSDQQVISEEAHSDNDKEN). A lipid anchor (N-myristoyl glycine) is attached at glycine 2. Composition is skewed to basic and acidic residues over residues 8 to 38 (RSIDITTDPKKVGEGDEVAGKVEKIDVDQKT) and 59 to 77 (AVEKKETEEHSENDKDLTT). The segment covering 81 to 93 (AAVAEGGDAVAET) has biased composition (low complexity). Residues 119-148 (KSKSKKDKVKKKWSFRSISFGKKDKQKPAK) form an F-actin binding region. Over residues 120-132 (SKSKKDKVKKKWS) the composition is skewed to basic residues. Phosphoserine occurs at positions 132, 135, and 137. Residues 139-151 (GKKDKQKPAKSEE) are compositionally biased toward basic and acidic residues. A compositionally biased stretch (low complexity) spans 152-181 (ATSPTSGTTSPTTAEAEAAPAGDAAVAEPS). Positions 216–227 (EQEKQANGETEK) are enriched in basic and acidic residues. Residues 246–262 (EPATVTATESNTTATEE) show a composition bias toward low complexity. The interval 345-725 (ASSEVIETVT…AEQEGESNNK (381 aa)) is interaction with PKA-R2. The segment covering 468-480 (SPPPPLPKSPPPS) has biased composition (pro residues). Residues 532 to 544 (EQEKQQEEAKVDS) show a composition bias toward basic and acidic residues. The segment covering 545–561 (VPETIEESSSTVVVEEV) has biased composition (low complexity). Basic and acidic residues predominate over residues 578–594 (DVQKPIEDQDTPDEKES). A compositionally biased stretch (low complexity) spans 626–638 (SISSNVAESSSVS). The span at 674 to 684 (EEAHSDNDKEN) shows a compositional bias: basic and acidic residues.

As to quaternary structure, homodimer. Interacts with Cam; interaction is calcium-dependent and is inhibited by PKC-mediated phosphorylation of Akap200. Interacts with N/Notch; the interaction stabilizes N/Notch protein levels by preventing Cbl-mediated ubiquitination and subsequent lysosomal degradation of N/Notch. Interacts with Pka-R2. Binds to F-actin; interaction is independent of myristoylation, but is inhibited by Akap200 phosphorylation and Cam binding. Isoform B: Does not bind to Pka-R2. Myristoylated; myristoylation promotes accumulation at the cell periphery. Post-translationally, phosphorylated; phosphorylation prevents binding to F-actin and Cam. As to expression, detected in the brain in both neurons and glia (including perineurial glia); specifically in the neuronal nuclei in the cortex and synaptic neuropil (at protein level). Detected in germline cells, somatic follicle cells and outer rim of the ring canals during oogenesis (at protein level). Isoform A: Detected in the adult (at protein level). Isoform B: Detected in the adult with higher levels in the head (at protein level).

The protein localises to the cytoplasm. It localises to the cytosol. It is found in the cell membrane. Its subcellular location is the cytoskeleton. In terms of biological role, scaffolding protein involved in the regulation of PKA signaling and anchoring to the actin cytoskeleton integrating signals propagated by cAMP, diacylglycerol and calcium. Contributes to the maintenance and regulation of cytoskeletal structures in germline via PKA-mediated signaling. As part of ethanol response in the glia, mediates ethanol-induced structural remodeling of actin cytoskeleton and perineurial membrane topology by anchoring PKA to the membrane of perineurial glia. In specific tissues such as eye and thorax, promotes N/Notch protein stability by inhibiting Cbl-mediated ubiquitination and lysosomal degradation pathway of N/Notch in a PKA-independent way. In the circadian brain neurons evening cells (E-cells), might have a role in circadian pacemaker synchronization by playing a redundant role in signaling downstream of the G protein-couple receptor Pdfr. This is A-kinase anchor protein 200 from Drosophila melanogaster (Fruit fly).